The chain runs to 263 residues: Cytochrome c oxidase subunit 3 (263 aa).

7 consecutive transmembrane segments (helical) span residues 7 to 27 (ITVL…KAHL), 44 to 64 (FSVG…VYSI), 78 to 98 (GMLS…WGIL), 120 to 140 (LILT…CLQF), 145 to 165 (GMSL…ECFA), 191 to 211 (VTGL…IYFI), and 241 to 261 (ITIL…YFFY).

This sequence belongs to the cytochrome c oxidase subunit 3 family. As to quaternary structure, component of the cytochrome c oxidase (complex IV, CIV), a multisubunit enzyme composed of a catalytic core of 3 subunits and several supernumerary subunits. The complex exists as a monomer or a dimer and forms supercomplexes (SCs) in the inner mitochondrial membrane with ubiquinol-cytochrome c oxidoreductase (cytochrome b-c1 complex, complex III, CIII).

It is found in the mitochondrion inner membrane. It catalyses the reaction 4 Fe(II)-[cytochrome c] + O2 + 8 H(+)(in) = 4 Fe(III)-[cytochrome c] + 2 H2O + 4 H(+)(out). Component of the cytochrome c oxidase, the last enzyme in the mitochondrial electron transport chain which drives oxidative phosphorylation. The respiratory chain contains 3 multisubunit complexes succinate dehydrogenase (complex II, CII), ubiquinol-cytochrome c oxidoreductase (cytochrome b-c1 complex, complex III, CIII) and cytochrome c oxidase (complex IV, CIV), that cooperate to transfer electrons derived from NADH and succinate to molecular oxygen, creating an electrochemical gradient over the inner membrane that drives transmembrane transport and the ATP synthase. Cytochrome c oxidase is the component of the respiratory chain that catalyzes the reduction of oxygen to water. Electrons originating from reduced cytochrome c in the intermembrane space (IMS) are transferred via the dinuclear copper A center (CU(A)) of subunit 2 and heme A of subunit 1 to the active site in subunit 1, a binuclear center (BNC) formed by heme A3 and copper B (CU(B)). The BNC reduces molecular oxygen to 2 water molecules using 4 electrons from cytochrome c in the IMS and 4 protons from the mitochondrial matrix. The sequence is that of Cytochrome c oxidase subunit 3 (COIII) from Plasmodium vivax.